The chain runs to 732 residues: X-ray repair cross-complementing protein 5 (732 aa).

The VWFA domain occupies 9–231 (AVVLCMDVGF…DEIYSFSESL (223 aa)). The tract at residues 138-165 (LSSRFSKSQLDIIIHSLKKCDISLQFFL) is leucine-zipper. Residue K144 is modified to N6-acetyllysine. K195 participates in a covalent cross-link: Glycyl lysine isopeptide (Lys-Gly) (interchain with G-Cter in SUMO2). The 200-residue stretch at 253 to 452 (IGSNLSIRIA…KYAPTEAQLN (200 aa)) folds into the Ku domain. S255 and S258 each carry phosphoserine. Position 265 is an N6-acetyllysine (K265). Residue S318 is modified to Phosphoserine. Position 332 is an N6-acetyllysine (K332). Residues K532 and K534 each participate in a glycyl lysine isopeptide (Lys-Gly) (interchain with G-Cter in SUMO2) cross-link. At T535 the chain carries Phosphothreonine. Glycyl lysine isopeptide (Lys-Gly) (interchain with G-Cter in SUMO2) cross-links involve residues K566 and K568. Phosphoserine; by PRKDC occurs at positions 577, 579, and 580. K660 and K665 each carry N6-acetyllysine. Glycyl lysine isopeptide (Lys-Gly) (interchain with G-Cter in SUMO2) cross-links involve residues K669 and K688. The residue at position 715 (T715) is a Phosphothreonine; by PRKDC. Residues 720 to 728 (EEGGDVDDL) carry the EEXXXDL motif motif.

Belongs to the ku80 family. Heterodimer composed of XRCC5/Ku80 and XRCC6/Ku70; heterodimerization stabilizes XRCC5 protein. Component of the core long-range non-homologous end joining (NHEJ) complex (also named DNA-PK complex) composed of PRKDC, LIG4, XRCC4, XRCC6/Ku70, XRCC5/Ku86 and NHEJ1/XLF. Additional component of the NHEJ complex includes PAXX. Following autophosphorylation, PRKDC dissociates from DNA, leading to formation of the short-range NHEJ complex, composed of LIG4, XRCC4, XRCC6/Ku70, XRCC5/Ku86 and NHEJ1/XLF. The XRCC5-XRCC6 dimer also associates with NAA15, and this complex displays DNA binding activity towards the osteocalcin FGF response element (OCFRE). In addition, XRCC5 binds to the osteoblast-specific transcription factors MSX2 and RUNX2. Interacts with ELF3. Interacts with APLF (via KBM motif). The XRCC5/XRCC6 dimer associates in a DNA-dependent manner with APEX1. Identified in a complex with DEAF1 and XRCC6. Interacts with NR4A3; the DNA-dependent protein kinase complex DNA-PK phosphorylates and activates NR4A3 and prevents NR4A3 ubiquitinylation and degradation. Interacts with RNF138. Interacts with CYREN isoform 1 (CYREN-1) and isoform 4 (CYREN-2) (via KBM motif). Interacts with WRN (via KBM motif). Interacts (via N-terminus) with HSF1 (via N-terminus); this interaction is direct and prevents XRCC5/XRCC6 heterodimeric binding and non-homologous end joining (NHEJ) repair activities induced by ionizing radiation (IR). Interacts with DHX9; this interaction occurs in a RNA-dependent manner. Part of the HDP-RNP complex composed of at least HEXIM1, PRKDC, XRCC5, XRCC6, paraspeckle proteins (SFPQ, NONO, PSPC1, RBM14, and MATR3) and NEAT1 RNA. Interacts with ERCC6. The XRCC5-XRCC6 dimer associates with ALKBH2. Interacts with TPRN; TPRN interacts with a number of DNA damage response proteins, is recruited to sites of DNA damage and may play a role in DNA damage repair. Interacts with ERCC6L2. In terms of assembly, (Microbial infection) Interacts with human T-cell leukemia virus 1/HTLV-1 protein HBZ. In terms of processing, ADP-ribosylated by PARP3. Post-translationally, phosphorylated on serine residues. Phosphorylation by PRKDC may enhance helicase activity. Sumoylated. In terms of processing, ubiquitinated by RNF8 via 'Lys-48'-linked ubiquitination following DNA damage, leading to its degradation and removal from DNA damage sites. Ubiquitinated by RNF138, leading to remove the Ku complex from DNA breaks.

It is found in the nucleus. The protein resides in the nucleolus. It localises to the chromosome. Single-stranded DNA-dependent ATP-dependent helicase that plays a key role in DNA non-homologous end joining (NHEJ) by recruiting DNA-PK to DNA. Required for double-strand break repair and V(D)J recombination. Also has a role in chromosome translocation. The DNA helicase II complex binds preferentially to fork-like ends of double-stranded DNA in a cell cycle-dependent manner. It works in the 3'-5' direction. During NHEJ, the XRCC5-XRRC6 dimer performs the recognition step: it recognizes and binds to the broken ends of the DNA and protects them from further resection. Binding to DNA may be mediated by XRCC6. The XRCC5-XRRC6 dimer acts as a regulatory subunit of the DNA-dependent protein kinase complex DNA-PK by increasing the affinity of the catalytic subunit PRKDC to DNA by 100-fold. The XRCC5-XRRC6 dimer is probably involved in stabilizing broken DNA ends and bringing them together. The assembly of the DNA-PK complex to DNA ends is required for the NHEJ ligation step. The XRCC5-XRRC6 dimer probably also acts as a 5'-deoxyribose-5-phosphate lyase (5'-dRP lyase), by catalyzing the beta-elimination of the 5' deoxyribose-5-phosphate at an abasic site near double-strand breaks. XRCC5 probably acts as the catalytic subunit of 5'-dRP activity, and allows to 'clean' the termini of abasic sites, a class of nucleotide damage commonly associated with strand breaks, before such broken ends can be joined. The XRCC5-XRRC6 dimer together with APEX1 acts as a negative regulator of transcription. In association with NAA15, the XRCC5-XRRC6 dimer binds to the osteocalcin promoter and activates osteocalcin expression. As part of the DNA-PK complex, involved in the early steps of ribosome assembly by promoting the processing of precursor rRNA into mature 18S rRNA in the small-subunit processome. Binding to U3 small nucleolar RNA, recruits PRKDC and XRCC5/Ku86 to the small-subunit processome. Plays a role in the regulation of DNA virus-mediated innate immune response by assembling into the HDP-RNP complex, a complex that serves as a platform for IRF3 phosphorylation and subsequent innate immune response activation through the cGAS-STING pathway. The protein is X-ray repair cross-complementing protein 5 (XRCC5) of Homo sapiens (Human).